Consider the following 128-residue polypeptide: uncharacterized protein (128 aa).

This is an uncharacterized protein from Mycobacterium tuberculosis (strain CDC 1551 / Oshkosh).